The sequence spans 498 residues: ATP synthase subunit beta, chloroplastic (498 aa).

172 to 179 (GGAGVGKT) provides a ligand contact to ATP.

Belongs to the ATPase alpha/beta chains family. As to quaternary structure, F-type ATPases have 2 components, CF(1) - the catalytic core - and CF(0) - the membrane proton channel. CF(1) has five subunits: alpha(3), beta(3), gamma(1), delta(1), epsilon(1). CF(0) has four main subunits: a(1), b(1), b'(1) and c(9-12).

It localises to the plastid. The protein resides in the chloroplast thylakoid membrane. The catalysed reaction is ATP + H2O + 4 H(+)(in) = ADP + phosphate + 5 H(+)(out). In terms of biological role, produces ATP from ADP in the presence of a proton gradient across the membrane. The catalytic sites are hosted primarily by the beta subunits. In Triticum aestivum (Wheat), this protein is ATP synthase subunit beta, chloroplastic.